The following is an 867-amino-acid chain: MEIENTRDSDSMRGSRVGFSGSLVSGKKSARFKDDESYVEITLDVRDDSVSVQNIKGADHEAALLASRLEKRPNNTLGSQLSFHLRQVSKELKRMTSSNKFQKIDRSKSGAARALRGLQFMNKNVGTEGWSEVESRFDQLAVNGMLTKSLFGQCIGMKESSEFAEELFDALARKRCITSPAVTKDELREFWEQITDTSFDARLQTFFDMVDKDADGRITQEEVKEIISLSASANKLSKIQDNSDEYAALIMEELDPGNVGYIELYNLETLLLQAPSHSMNLSTNSRVLSRMLSQKLKPTKERNPFKRCKRRLDYFIEDNWKRIWVMALWLSICAGLFTWKFIQYKRRAVFDVMGYCVSVAKGGAETTKFNMALVLLPVCRNTITWLRSRTKLGKIIPFDDNINFHKVIAFGIAVGVGLHAISHLTCDFPRLLHATDEEYEPMKPFFGDERPNNYWWFVKGTEGWTGVVMVVLMIIAYVLAQPWFRRNRLNLPSTIKKLTGFNAFWYSHHLFVIVYVLFIIHGYFLYLSKKWYKKTTWMYIAVPMILYACERLLRAFRSGYKAVKILKVAVYPGNVMAVHMSKPQGFKYTSGQYIFVNCSDVSSFQWHPFTISSAPGDDYLSMHIRTLGDWTSQLKTLFSKVCEPPTGDQSGLLRADVAKADYKPRLPKLLIDGPYGAPAQDYKKYDVVLLVGLGIGATPLISIVKDVLNNIKQQKNIEDGTKGSKRSPFATKRAYFYWVTREQGSFEWFKGVMDEVSENDQEGLIELHNYCTSVYEEGDARSALITMLQSIQQAKSGVDIVSGTRVKTHFARPNWRQVFKRVTINHPDQRIGVFYCGPQGLVGELRHLSQDFSHKTGTKFEFHKENF.

Positions Met-1–Arg-13 are enriched in basic and acidic residues. The tract at residues Met-1–Ser-20 is disordered. The Cytoplasmic portion of the chain corresponds to Met-1 to Arg-322. A phosphoserine; by CPK mark is found at Ser-82 and Ser-97. EF-hand-like regions lie at residues Ala-141–Ser-149 and Arg-175–Glu-186. 2 EF-hand domains span residues Ser-198–Ala-233 and Asn-242–His-277. Residues Asp-211, Asp-213, Asp-215, Arg-217, and Glu-222 each coordinate Ca(2+). The helical transmembrane segment at Ile-323–Gln-343 threads the bilayer. Residues Tyr-344–Ser-358 are Extracellular-facing. Residues Val-359 to Cys-379 traverse the membrane as a helical segment. In terms of domain architecture, Ferric oxidoreductase spans Lys-361–Ile-519. Topologically, residues Arg-380–Val-407 are cytoplasmic. Residues Ile-408–Phe-428 form a helical membrane-spanning segment. Topologically, residues Pro-429 to Gly-463 are extracellular. The helical transmembrane segment at Trp-464–Phe-484 threads the bilayer. Over Arg-485–Tyr-506 the chain is Cytoplasmic. The helical transmembrane segment at Ser-507–Leu-527 threads the bilayer. The Extracellular portion of the chain corresponds to Ser-528–Asp-686. The FAD-binding FR-type domain maps to Ser-558–Asp-681. Residues Val-687 to Val-707 traverse the membrane as a helical segment. The Cytoplasmic portion of the chain corresponds to Leu-708 to Phe-867.

It belongs to the RBOH (TC 5.B.1.3) family. As to quaternary structure, monomer and homodimer. Phosphorylation at Ser-82 and Ser-97 is required for full activity of RBOHB. Not phosphorylated at Ser-89. Phosphorylation at Ser-82 is induced by fungal elicitor treatment.

The protein localises to the cell membrane. Inhibited by diphenylene iodinium (DPI). Its function is as follows. Calcium-dependent NADPH oxidase that generates superoxide. Involved in the massive phase II oxidative burst induced by pathogen infection. The protein is Respiratory burst oxidase homolog protein B (RBOHB) of Solanum tuberosum (Potato).